Reading from the N-terminus, the 871-residue chain is DNA mismatch repair protein MutS (871 aa).

Residue 625–632 (GPNMAGKS) coordinates ATP.

The protein belongs to the DNA mismatch repair MutS family.

This protein is involved in the repair of mismatches in DNA. It is possible that it carries out the mismatch recognition step. This protein has a weak ATPase activity. The protein is DNA mismatch repair protein MutS of Chlorobium limicola (strain DSM 245 / NBRC 103803 / 6330).